We begin with the raw amino-acid sequence, 236 residues long: Probable methylthioribulose-1-phosphate dehydratase (236 aa).

Residues 1 to 29 form a disordered region; that stretch reads MQNVQQPKKRKLSDEIIAEDEDYQRDPEH. C103 serves as a coordination point for substrate. 3 residues coordinate Zn(2+): H121, H123, and H201.

It belongs to the aldolase class II family. MtnB subfamily. Requires Zn(2+) as cofactor.

Its subcellular location is the cytoplasm. It carries out the reaction 5-(methylsulfanyl)-D-ribulose 1-phosphate = 5-methylsulfanyl-2,3-dioxopentyl phosphate + H2O. It participates in amino-acid biosynthesis; L-methionine biosynthesis via salvage pathway; L-methionine from S-methyl-5-thio-alpha-D-ribose 1-phosphate: step 2/6. Functionally, catalyzes the dehydration of methylthioribulose-1-phosphate (MTRu-1-P) into 2,3-diketo-5-methylthiopentyl-1-phosphate (DK-MTP-1-P). The chain is Probable methylthioribulose-1-phosphate dehydratase from Trichoplax adhaerens (Trichoplax reptans).